Reading from the N-terminus, the 429-residue chain is Serine--tRNA ligase (429 aa).

236–238 is a binding site for L-serine; sequence TAE. 267-269 lines the ATP pocket; the sequence is RSE. Residue E290 coordinates L-serine. 354 to 357 is a binding site for ATP; sequence EISS. S390 is a binding site for L-serine.

The protein belongs to the class-II aminoacyl-tRNA synthetase family. Type-1 seryl-tRNA synthetase subfamily. As to quaternary structure, homodimer. The tRNA molecule binds across the dimer.

It is found in the cytoplasm. It catalyses the reaction tRNA(Ser) + L-serine + ATP = L-seryl-tRNA(Ser) + AMP + diphosphate + H(+). The catalysed reaction is tRNA(Sec) + L-serine + ATP = L-seryl-tRNA(Sec) + AMP + diphosphate + H(+). It functions in the pathway aminoacyl-tRNA biosynthesis; selenocysteinyl-tRNA(Sec) biosynthesis; L-seryl-tRNA(Sec) from L-serine and tRNA(Sec): step 1/1. In terms of biological role, catalyzes the attachment of serine to tRNA(Ser). Is also able to aminoacylate tRNA(Sec) with serine, to form the misacylated tRNA L-seryl-tRNA(Sec), which will be further converted into selenocysteinyl-tRNA(Sec). The protein is Serine--tRNA ligase of Alcanivorax borkumensis (strain ATCC 700651 / DSM 11573 / NCIMB 13689 / SK2).